A 1102-amino-acid chain; its full sequence is Carbamoyl phosphate synthase large chain (1102 aa).

A carboxyphosphate synthetic domain region spans residues Met-1–Glu-408. Residues Arg-129, Arg-175, Gly-181, Gly-182, Glu-214, Ile-216, Glu-221, Gly-247, Val-248, His-249, Gln-291, and Glu-305 each contribute to the ATP site. Residues Ala-138–Val-334 form the ATP-grasp 1 domain. Gln-291, Glu-305, and Asn-307 together coordinate Mg(2+). Gln-291, Glu-305, and Asn-307 together coordinate Mn(2+). Residues Lys-409–Ser-551 are oligomerization domain. A carbamoyl phosphate synthetic domain region spans residues Glu-552–Tyr-954. The ATP-grasp 2 domain maps to Gly-682–Leu-873. ATP contacts are provided by Arg-718, Arg-757, Leu-759, Glu-764, Gly-789, Ile-790, His-791, Ser-792, Gln-832, and Glu-844. Mg(2+)-binding residues include Gln-832, Glu-844, and Asn-846. Mn(2+)-binding residues include Gln-832, Glu-844, and Asn-846. In terms of domain architecture, MGS-like spans Gly-955–Ala-1100. The allosteric domain stretch occupies residues Gly-955–Asp-1102.

It belongs to the CarB family. As to quaternary structure, composed of two chains; the small (or glutamine) chain promotes the hydrolysis of glutamine to ammonia, which is used by the large (or ammonia) chain to synthesize carbamoyl phosphate. Tetramer of heterodimers (alpha,beta)4. Mg(2+) is required as a cofactor. The cofactor is Mn(2+).

The catalysed reaction is hydrogencarbonate + L-glutamine + 2 ATP + H2O = carbamoyl phosphate + L-glutamate + 2 ADP + phosphate + 2 H(+). It catalyses the reaction hydrogencarbonate + NH4(+) + 2 ATP = carbamoyl phosphate + 2 ADP + phosphate + 2 H(+). It participates in amino-acid biosynthesis; L-arginine biosynthesis; carbamoyl phosphate from bicarbonate: step 1/1. It functions in the pathway pyrimidine metabolism; UMP biosynthesis via de novo pathway; (S)-dihydroorotate from bicarbonate: step 1/3. Large subunit of the glutamine-dependent carbamoyl phosphate synthetase (CPSase). CPSase catalyzes the formation of carbamoyl phosphate from the ammonia moiety of glutamine, carbonate, and phosphate donated by ATP, constituting the first step of 2 biosynthetic pathways, one leading to arginine and/or urea and the other to pyrimidine nucleotides. The large subunit (synthetase) binds the substrates ammonia (free or transferred from glutamine from the small subunit), hydrogencarbonate and ATP and carries out an ATP-coupled ligase reaction, activating hydrogencarbonate by forming carboxy phosphate which reacts with ammonia to form carbamoyl phosphate. This is Carbamoyl phosphate synthase large chain from Streptomyces avermitilis (strain ATCC 31267 / DSM 46492 / JCM 5070 / NBRC 14893 / NCIMB 12804 / NRRL 8165 / MA-4680).